The primary structure comprises 528 residues: Dihydromonacolin L monooxygenase LovA (528 aa).

At 1 to 23 (MTVDALTQPHHLLSLAWNDTQQH) the chain is on the cytoplasmic side. The chain crosses the membrane as a helical; Signal-anchor for type II membrane protein span at residues 24-44 (GSWFAPLVTTSAGLLCLLLYL). The Lumenal portion of the chain corresponds to 45–528 (CSSGRRSELP…DEDIRLPGSL (484 aa)). Asn-399 is a glycosylation site (N-linked (GlcNAc...) asparagine). Cys-465 contacts heme.

It belongs to the cytochrome P450 family. Heme is required as a cofactor.

The protein localises to the membrane. It is found in the endoplasmic reticulum membrane. The catalysed reaction is dihydromonacolin L carboxylate + reduced [NADPH--hemoprotein reductase] + O2 = monacolin L carboxylate + oxidized [NADPH--hemoprotein reductase] + 2 H2O + H(+). It catalyses the reaction monacolin L carboxylate + reduced [NADPH--hemoprotein reductase] + O2 = monacolin J carboxylate + oxidized [NADPH--hemoprotein reductase] + H2O + H(+). It participates in polyketide biosynthesis; lovastatin biosynthesis. In terms of biological role, dihydromonacolin L monooxygenase; part of the gene cluster that mediates the biosynthesis of lovastatin (also known as mevinolin, mevacor or monacolin K), a hypolipidemic inhibitor of (3S)-hydroxymethylglutaryl-coenzyme A (HMG-CoA) reductase (HMGR). The first step in the biosynthesis of lovastatin is the production of dihydromonacolin L acid by the lovastatin nonaketide synthase lovB and the trans-acting enoyl reductase lovC via condensation of one acetyl-CoA unit and 8 malonyl-CoA units. Dihydromonacolin L acid is released from lovB by the thioesterase lovG. Next, dihydromonacolin L acid is oxidized by the dihydromonacolin L monooxygenase lovA twice to form monacolin J acid. The 2-methylbutyrate moiety of lovastatin is synthesized by the lovastatin diketide synthase lovF via condensation of one acetyl-CoA unit and one malonyl-CoA unit. Finally, the covalent attachment of this moiety to monacolin J acid is catalyzed by the transesterase lovD to yield lovastatin. LovD has broad substrate specificity and can also convert monacolin J to simvastatin using alpha-dimethylbutanoyl-S-methyl-3-mercaptopropionate (DMB-S-MMP) as the thioester acyl donor, and can also catalyze the reverse reaction and function as hydrolase in vitro. LovD has much higher activity with LovF-bound 2-methylbutanoate than with free diketide substrates. This is Dihydromonacolin L monooxygenase LovA from Aspergillus terreus (strain NIH 2624 / FGSC A1156).